The sequence spans 181 residues: CASP-like protein 5A1 (181 aa).

Residues 1–38 (MFASRPVVHPLEVAAPAHPVQQPAPGVLMKDLPGMPGT) are Cytoplasmic-facing. The helical transmembrane segment at 39-59 (PGGLGLRVLQLLFAAISLAVM) threads the bilayer. Residues 60–77 (SSTADFASVSAFCYLITT) lie on the Extracellular side of the membrane. Residues 78–98 (TVLQCVWSLTVAIVDIYALLV) traverse the membrane as a helical segment. Residues 99-115 (KRCLQNRRAVTLFSIGD) are Cytoplasmic-facing. A helical membrane pass occupies residues 116-136 (GITWLVSFSGACAAAGIPVLI). At 137 to 153 (DADLIMCSENPCASFQT) the chain is on the extracellular side. A helical membrane pass occupies residues 154 to 174 (AVAMGFMCCFSLLPSFLLNFY). The Cytoplasmic portion of the chain corresponds to 175-181 (SIASSHG).

This sequence belongs to the Casparian strip membrane proteins (CASP) family. In terms of assembly, homodimer and heterodimers.

It is found in the cell membrane. This is CASP-like protein 5A1 from Zea mays (Maize).